Consider the following 339-residue polypeptide: MDANTEHPAVGYGKLGVLLVNLGTPDGTDVTSMRRYLREFLSDRRVIEWSRLFWYPILYGIVLNTRPRKVGKAYELIWNKDLNESWLRTYTRNQAALMAEAFGGQPQVVVDWAMRYGQPSIASRIEALQKAGCERILVFPLYPQYAAATTATVNDKAFEALLKMRWQPALRTVPPYHDDPVYIDALATSINKHLATLDWEPELVLASFHGIPKSYFEKGDPYYCQCQKTARLLREKLGWPQDRLQVTFQSRFGPEEWLQPYTDATVERLAKEGVKRIAVINPGFVSDCLETLEEIAGQAAESFHHNGGEKFAHIPCLNDSPEGMAVLNHVVRRELEGWL.

Fe cation-binding residues include H209 and E290.

It belongs to the ferrochelatase family.

It localises to the cytoplasm. It carries out the reaction heme b + 2 H(+) = protoporphyrin IX + Fe(2+). Its pathway is porphyrin-containing compound metabolism; protoheme biosynthesis; protoheme from protoporphyrin-IX: step 1/1. In terms of biological role, catalyzes the ferrous insertion into protoporphyrin IX. In Rhizobium meliloti (strain 1021) (Ensifer meliloti), this protein is Ferrochelatase.